We begin with the raw amino-acid sequence, 91 residues long: Large ribosomal subunit protein bL27 (91 aa).

Belongs to the bacterial ribosomal protein bL27 family.

The chain is Large ribosomal subunit protein bL27 from Deinococcus deserti (strain DSM 17065 / CIP 109153 / LMG 22923 / VCD115).